A 1284-amino-acid chain; its full sequence is 1,6-alpha-glucosyltransferase (1284 aa).

The signal sequence occupies residues 1 to 35; sequence MRPPNKEIPRILAFFTAFTLFGSTLALLPAPPAHA. D433 (nucleophile) is an active-site residue. Residue D436 is part of the active site. D495 serves as the catalytic Proton donor. CBM6 domains follow at residues 856–988 and 994–1120; these read SQYE…ITVP and GKYE…LLLS.

Belongs to the glycosyl hydrolase 31 family.

It localises to the secreted. It carries out the reaction 2 D-maltotetraose = alpha-isomaltosyl-(1-&gt;4)-D-maltotriose + D-maltotriose. The enzyme catalyses Transfers an alpha-D-glucosyl residue in a (1-&gt;4)-alpha-D-glucan to the primary hydroxy group of glucose, free or combined in a (1-&gt;4)-alpha-D-glucan.. With respect to regulation, strongly activated and stabilized by various divalent cations. Strongly inhibited by Cu(2+), Hg(2+) and EDTA, and moderately inhibited by Tris. Functionally, glycosyltransferase involved, together with CtsY, in the conversion of alpha-1,4-glucan into a cyclic tetrasaccharide (CTS) constructed from four alpha-glucopyranosyl residues. Catalyzes an intermolecular transglucosylation in which a glucose residue at the non-reducing end of maltotetraose is transferred to the 6-OH of an other non-reducing glucose, leading to the formation of alpha-isomaltosyl-(1-&gt;4)-D-maltotriose. Has a wide substrate specificity, and acts on oligosaccharides with alpha-1,4-glucosidic linkages at the non-reducing end, except for maltose. In contrast, has little activity toward oligosaccharides with alpha-1,6-glucosidic linkages at the non-reducing end. The chain is 1,6-alpha-glucosyltransferase from Sporosarcina globispora (Bacillus globisporus).